The chain runs to 230 residues: Type II restriction enzyme MjaV (230 aa).

It catalyses the reaction Endonucleolytic cleavage of DNA to give specific double-stranded fragments with terminal 5'-phosphates.. In terms of biological role, a P subtype restriction enzyme that recognizes the double-stranded sequence 5'-GTAC-3'; the cleavage site is unknown. The chain is Type II restriction enzyme MjaV (mjaVR) from Methanocaldococcus jannaschii (strain ATCC 43067 / DSM 2661 / JAL-1 / JCM 10045 / NBRC 100440) (Methanococcus jannaschii).